The sequence spans 197 residues: Rac-like GTP-binding protein 6 (197 aa).

13 to 20 serves as a coordination point for GTP; the sequence is GDGAVGKT. The Effector region motif lies at 35 to 43; that stretch reads YVPTVFDNF. Residues 60-64 and 118-121 each bind GTP; these read DTAGQ and TKLD. Cys194 carries the cysteine methyl ester modification. Cys194 carries the S-geranylgeranyl cysteine lipid modification. Positions 195-197 are cleaved as a propeptide — removed in mature form; that stretch reads SIL.

This sequence belongs to the small GTPase superfamily. Rho family.

The protein resides in the cytoplasm. Its subcellular location is the membrane. Functionally, inactive GDP-bound Rho GTPases reside in the cytosol, are found in a complex with Rho GDP-dissociation inhibitors (Rho GDIs), and are released from the GDI protein in order to translocate to membranes upon activation. This chain is Rac-like GTP-binding protein 6 (RAC6), found in Oryza sativa subsp. japonica (Rice).